We begin with the raw amino-acid sequence, 389 residues long: Cellobiose 2-epimerase (389 aa).

This sequence belongs to the cellobiose 2-epimerase family.

The catalysed reaction is D-cellobiose = beta-D-glucosyl-(1-&gt;4)-D-mannopyranose. In terms of biological role, catalyzes the reversible epimerization of cellobiose to 4-O-beta-D-glucopyranosyl-D-mannose (Glc-Man). The chain is Cellobiose 2-epimerase from Ruminococcus albus (strain ATCC 27210 / DSM 20455 / JCM 14654 / NCDO 2250 / 7).